A 64-amino-acid polypeptide reads, in one-letter code: Small ribosomal subunit protein bS21 (64 aa).

The protein belongs to the bacterial ribosomal protein bS21 family.

The polypeptide is Small ribosomal subunit protein bS21 (Pelagibacter ubique (strain HTCC1062)).